Reading from the N-terminus, the 105-residue chain is Protein S100-A11 (105 aa).

M1 carries the N-acetylmethionine modification. The residue at position 2 (A2) is an N-acetylalanine; in Protein S100-A11, N-terminally processed. K3 is subject to N6-acetyllysine. Residues S5 and S6 each carry the phosphoserine modification. Phosphothreonine is present on T10. EF-hand domains follow at residues 13–49 (CIES…ELAA) and 55–90 (KDPG…LAMA). K27 carries the post-translational modification N6-acetyllysine. 7 residues coordinate Ca(2+): T33, E38, D68, N70, D72, Q74, and E79.

This sequence belongs to the S-100 family. As to quaternary structure, homodimer; disulfide-linked. In terms of processing, phosphorylation at Thr-10 by PRKCA significantly suppresses homodimerization and promotes association with NCL/nucleolin which induces nuclear translocation.

The protein resides in the cytoplasm. Its subcellular location is the nucleus. Functionally, facilitates the differentiation and the cornification of keratinocytes. The sequence is that of Protein S100-A11 (S100A11) from Homo sapiens (Human).